The chain runs to 207 residues: uncharacterized protein (207 aa).

The S-adenosyl-L-methionine site is built by Gly51 and Asp72.

This sequence belongs to the methyltransferase superfamily. YrrT family.

Functionally, could be a S-adenosyl-L-methionine-dependent methyltransferase. This is an uncharacterized protein from Staphylococcus carnosus (strain TM300).